Reading from the N-terminus, the 331-residue chain is MVKTANSAYDNFIKNSVDLDSEQTGIARNSRDWLYGNLKNFPKVVENFPKLYAGKEIIGFGSFRRRTKIRPLDDIDLMLVFTGEGTTYTEYADKIVLNVPGDADKLRKLVNDDGTLNSIRVIEKIKSSLSIIPQYKKAEIHRRQEATTLELSTYDWVFDIVPAFITSENAYGKSYYIIPDGSGNWKKTDPRIDNERATETNQKFDGNVLGLIRVIKYWNTNRSKKISSYLMENIVLDYFQNKFYWNGMKQELRGFFEYLKTSIYNSHYDPKGIQGDLNTLDYNTKLSISNQASGCFENIDLAIRYESLGQHKEAIECWKKVFGDEFPSHED.

Belongs to the CD-NTase family. D12 subfamily.

In terms of biological role, cyclic nucleotide synthase (second messenger synthase) of a CBASS antivirus system. CBASS (cyclic oligonucleotide-based antiphage signaling system) provides immunity against bacteriophage. The CD-NTase protein synthesizes cyclic nucleotides in response to infection; these serve as specific second messenger signals. The signals activate a diverse range of effectors, leading to bacterial cell death and thus abortive phage infection. A type I-B CBASS system. Functionally, probably a cyclic nucleotide synthase that makes second messenger nucleotide which activates a CBASS antiviral defense system. Protects B.subtilis against phage infection. When IK1_05630 and IK1_05631 are introduced in B.subtilis BEST7003 there is 1000-fold protection against phage SBSphiC. Both genes are required for protection. Activation leads to bacterial cell lysis and death, which occurs before the phage has finished its replication cycle, thus protecting non-infected bacteria by aborting the phage infection and preventing its propagation. The sequence is that of Probable cyclic nucleotide synthase IK1_05630 from Bacillus cereus (strain VD146).